Reading from the N-terminus, the 261-residue chain is ATP synthase subunit a (261 aa).

6 helical membrane passes run 45–65 (ITNV…ILVL), 107–127 (VMTL…PLSF), 133–153 (MAVT…LGFM), 162–182 (MFWV…IEVI), 209–229 (IAGF…VTAI), and 232–252 (LELL…CVYL).

Belongs to the ATPase A chain family. As to quaternary structure, F-type ATPases have 2 components, CF(1) - the catalytic core - and CF(0) - the membrane proton channel. CF(1) has five subunits: alpha(3), beta(3), gamma(1), delta(1), epsilon(1). CF(0) has four main subunits: a, b, b' and c.

The protein localises to the cell inner membrane. Its function is as follows. Key component of the proton channel; it plays a direct role in the translocation of protons across the membrane. In Cereibacter sphaeroides (strain ATCC 17029 / ATH 2.4.9) (Rhodobacter sphaeroides), this protein is ATP synthase subunit a.